The primary structure comprises 415 residues: Carboxypeptidase B (415 aa).

An N-terminal signal peptide occupies residues 1-13 (MLLLLALVSVALA). Positions 14–108 (HASEEHFDGN…LESQFDSHTR (95 aa)) are cleaved as a propeptide — activation peptide. A Peptidase M14 domain is found at 116 to 410 (KYNKWETIEA…LAVKYIANYV (295 aa)). Cysteines 171 and 184 form a disulfide. Positions 174 and 177 each coordinate Zn(2+). Substrate is bound by residues 174 to 177 (HARE), arginine 232, and 249 to 250 (NR). 2 disulfides stabilise this stretch: cysteine 243-cysteine 266 and cysteine 257-cysteine 271. Histidine 302 is a binding site for Zn(2+). Residues 303-304 (SY) and tyrosine 354 each bind substrate. Glutamate 376 serves as the catalytic Proton donor/acceptor.

Belongs to the peptidase M14 family. The cofactor is Zn(2+).

The protein resides in the secreted. It localises to the zymogen granule lumen. The catalysed reaction is Preferential release of a C-terminal lysine or arginine amino acid.. The chain is Carboxypeptidase B (Cpb1) from Rattus norvegicus (Rat).